The primary structure comprises 379 residues: MNRPLRIGIVVGELSGDTLGEGFIKAIRARYPDAEFVGIGGPKMNALGCQSLFDMEELAVMGLVEVLGRLPRLLKVKAELVKYFTANPPDVFVGIDAPDFNLRLELSLKQAGIKTVHYVSPSVWAWRQNRIHGIAAATHLVLAFLPFEKAFYDKFNVPCEFIGHTLADSIPLASDKLAARQLLGLDEQRRWLAVLPGSRGSEMKMLAEPFIATCQKLQARYPDLGFVVALVNAKRRAQFEQAWQQVAPELNFVLVDDTARNVITAADAVMLASGTVALECMLLKRPMVVGYRVNAFTAFLAKRLLKTPYVSLPNILAGEELVKELLQDHCTVDNLYHEVSRLLESDNQALMDKFTEMHQWIRKDADQQAAQAVLHLIQK.

Belongs to the LpxB family.

It carries out the reaction a lipid X + a UDP-2-N,3-O-bis[(3R)-3-hydroxyacyl]-alpha-D-glucosamine = a lipid A disaccharide + UDP + H(+). The protein operates within bacterial outer membrane biogenesis; LPS lipid A biosynthesis. Functionally, condensation of UDP-2,3-diacylglucosamine and 2,3-diacylglucosamine-1-phosphate to form lipid A disaccharide, a precursor of lipid A, a phosphorylated glycolipid that anchors the lipopolysaccharide to the outer membrane of the cell. This Vibrio cholerae serotype O1 (strain ATCC 39541 / Classical Ogawa 395 / O395) protein is Lipid-A-disaccharide synthase.